The following is an 887-amino-acid chain: Leucine--tRNA ligase (887 aa).

Positions 48–58 (PYPSGKLHMGH) match the 'HIGH' region motif. A 'KMSKS' region motif is present at residues 644–648 (TMSKS). Lys647 contributes to the ATP binding site.

This sequence belongs to the class-I aminoacyl-tRNA synthetase family.

The protein resides in the cytoplasm. It catalyses the reaction tRNA(Leu) + L-leucine + ATP = L-leucyl-tRNA(Leu) + AMP + diphosphate. The polypeptide is Leucine--tRNA ligase (Leptothrix cholodnii (strain ATCC 51168 / LMG 8142 / SP-6) (Leptothrix discophora (strain SP-6))).